Consider the following 96-residue polypeptide: ESAT-6-like protein SAG1039 (96 aa).

This sequence belongs to the WXG100 family. sagEsxA-like subfamily. In terms of assembly, homodimer.

This Streptococcus agalactiae serotype V (strain ATCC BAA-611 / 2603 V/R) protein is ESAT-6-like protein SAG1039.